We begin with the raw amino-acid sequence, 212 residues long: Pyridoxine/pyridoxamine 5'-phosphate oxidase (212 aa).

Substrate is bound by residues 8 to 11 (RREY) and lysine 66. FMN contacts are provided by residues 61 to 66 (RIVLLK), 76 to 77 (FT), arginine 82, lysine 83, and glutamine 105. 3 residues coordinate substrate: tyrosine 123, arginine 127, and serine 131. Residues 140–141 (QS) and tryptophan 185 contribute to the FMN site. Residue 191–193 (RLH) participates in substrate binding. An FMN-binding site is contributed by arginine 195.

Belongs to the pyridoxamine 5'-phosphate oxidase family. Homodimer. FMN is required as a cofactor.

The enzyme catalyses pyridoxamine 5'-phosphate + O2 + H2O = pyridoxal 5'-phosphate + H2O2 + NH4(+). The catalysed reaction is pyridoxine 5'-phosphate + O2 = pyridoxal 5'-phosphate + H2O2. It functions in the pathway cofactor metabolism; pyridoxal 5'-phosphate salvage; pyridoxal 5'-phosphate from pyridoxamine 5'-phosphate: step 1/1. Its pathway is cofactor metabolism; pyridoxal 5'-phosphate salvage; pyridoxal 5'-phosphate from pyridoxine 5'-phosphate: step 1/1. In terms of biological role, catalyzes the oxidation of either pyridoxine 5'-phosphate (PNP) or pyridoxamine 5'-phosphate (PMP) into pyridoxal 5'-phosphate (PLP). This chain is Pyridoxine/pyridoxamine 5'-phosphate oxidase, found in Shewanella amazonensis (strain ATCC BAA-1098 / SB2B).